A 94-amino-acid chain; its full sequence is Pyrimidine/purine nucleoside phosphorylase (94 aa).

This sequence belongs to the nucleoside phosphorylase PpnP family.

It carries out the reaction a purine D-ribonucleoside + phosphate = a purine nucleobase + alpha-D-ribose 1-phosphate. The catalysed reaction is adenosine + phosphate = alpha-D-ribose 1-phosphate + adenine. The enzyme catalyses cytidine + phosphate = cytosine + alpha-D-ribose 1-phosphate. It catalyses the reaction guanosine + phosphate = alpha-D-ribose 1-phosphate + guanine. It carries out the reaction inosine + phosphate = alpha-D-ribose 1-phosphate + hypoxanthine. The catalysed reaction is thymidine + phosphate = 2-deoxy-alpha-D-ribose 1-phosphate + thymine. The enzyme catalyses uridine + phosphate = alpha-D-ribose 1-phosphate + uracil. It catalyses the reaction xanthosine + phosphate = alpha-D-ribose 1-phosphate + xanthine. In terms of biological role, catalyzes the phosphorolysis of diverse nucleosides, yielding D-ribose 1-phosphate and the respective free bases. Can use uridine, adenosine, guanosine, cytidine, thymidine, inosine and xanthosine as substrates. Also catalyzes the reverse reactions. The sequence is that of Pyrimidine/purine nucleoside phosphorylase from Escherichia coli (strain ATCC 8739 / DSM 1576 / NBRC 3972 / NCIMB 8545 / WDCM 00012 / Crooks).